Here is a 305-residue protein sequence, read N- to C-terminus: tRNA pseudouridine synthase B (305 aa).

D39 acts as the Nucleophile in catalysis.

It belongs to the pseudouridine synthase TruB family. Type 1 subfamily.

It catalyses the reaction uridine(55) in tRNA = pseudouridine(55) in tRNA. Responsible for synthesis of pseudouridine from uracil-55 in the psi GC loop of transfer RNAs. The chain is tRNA pseudouridine synthase B from Staphylococcus haemolyticus (strain JCSC1435).